Here is a 363-residue protein sequence, read N- to C-terminus: Outer membrane protein P2 (363 aa).

Residues 1–20 form the signal peptide; it reads MKKTLAALIVGAFAASAANA.

It belongs to the Gram-negative porin family. In terms of assembly, homotrimer.

The protein localises to the cell outer membrane. Its function is as follows. Forms pores that allow passive diffusion of small molecules across the outer membrane. The protein is Outer membrane protein P2 (ompP2) of Haemophilus influenzae.